The sequence spans 120 residues: uncharacterized protein (120 aa).

This sequence to M.jannaschii MJ1503.

This is an uncharacterized protein from Methanocaldococcus jannaschii (strain ATCC 43067 / DSM 2661 / JAL-1 / JCM 10045 / NBRC 100440) (Methanococcus jannaschii).